The primary structure comprises 742 residues: Tegument protein UL47 (742 aa).

Positions 1–10 are enriched in basic and acidic residues; that stretch reads MDAARDGRPE. Disordered regions lie at residues 1-128 and 155-199; these read MDAA…TAHL and EFPP…DDAA. Positions 10 to 30 match the Nuclear localization signal motif; sequence ERRPRRSGTYRTHPFQRPSAR. The span at 18 to 37 shows a compositional bias: low complexity; sequence TYRTHPFQRPSARRSLLDAL. Basic and acidic residues predominate over residues 38-62; the sequence is RAADAEAAERPRVRRPRPDFQRPPD. Positions 63-88 are enriched in acidic residues; it reads EDTSEDENVYDYIDGDSSDSADDYDS. The Nuclear export signal signature appears at 95-122; that stretch reads RGPNHGAGDAMDTDAPPERAPEGGAPQD. Positions 485–495 match the Nuclear export signal motif; the sequence is LSAYLTLFVAL.

The protein belongs to the alphaherpesvirinae HHV-1 UL47 family. Interacts with US3 kinase. Interacts with UL31 and UL34; these interactions seem important for efficient virion nuclear egress. Interacts with UL41/VHS. Post-translationally, phosphorylated by US3. This phosphorylation is required for proper nuclear localization.

It is found in the virion tegument. The protein localises to the host nucleus. It localises to the host cytoplasm. Its function is as follows. Tegument protein that can bind to various RNA transcripts. Plays a role in the attenuation of selective viral and cellular mRNA degradation by modulating the activity of host shutoff RNase UL41/VHS. Also plays a role in the primary envelopment of virions in the perinuclear space, probably by interacting with two nuclear egress proteins UL31 and UL34. This is Tegument protein UL47 from Bos taurus (Bovine).